A 117-amino-acid chain; its full sequence is Pancreatic progenitor cell differentiation and proliferation factor A (117 aa).

Residues 22 to 46 (GSTSSNSSCSSSEYTGEVIPHPPGL) form a disordered region. The segment covering 23–33 (STSSNSSCSSS) has biased composition (low complexity).

Belongs to the PPDPF family. Expressed exclusively in the exocrine cells during pancreas development.

Probable regulator of exocrine pancreas development. In Danio rerio (Zebrafish), this protein is Pancreatic progenitor cell differentiation and proliferation factor A (ppdpfa).